Reading from the N-terminus, the 291-residue chain is MTSSYLHFPDFDPVIFSIGPVALHWYGLMYLVGFVFAMWLAVRRANRPGSGWTKNEVENLLYAGFLGVFLGGRIGYVLFYNFPLFLDNPLYLFRVWDGGMSFHGGLIGVILVMIIFARRTKRSFFQVSDFIAPLIPFGLGAGRLGNFINGELWGRVDPDFRFAMLFPGSRAEDIALLPSHPQWQPIFDTYGVLPRHPSQLYELALEGVVLFIILNLFIRKPRPMGAVSGLFLIGYGALRIIVEFFRQPDAQFTGAWVQYISMGQILSIPMIIAGAIMMVWAYRRRPQQHVS.

Transmembrane regions (helical) follow at residues 21 to 41, 60 to 80, 96 to 116, 130 to 150, 198 to 218, 225 to 245, and 260 to 280; these read VALH…MWLA, LLYA…VLFY, WDGG…MIIF, FIAP…FING, SQLY…NLFI, GAVS…VEFF, and ISMG…MMVW. Arg143 provides a ligand contact to a 1,2-diacyl-sn-glycero-3-phospho-(1'-sn-glycerol).

This sequence belongs to the Lgt family.

It localises to the cell inner membrane. It carries out the reaction L-cysteinyl-[prolipoprotein] + a 1,2-diacyl-sn-glycero-3-phospho-(1'-sn-glycerol) = an S-1,2-diacyl-sn-glyceryl-L-cysteinyl-[prolipoprotein] + sn-glycerol 1-phosphate + H(+). It functions in the pathway protein modification; lipoprotein biosynthesis (diacylglyceryl transfer). Catalyzes the transfer of the diacylglyceryl group from phosphatidylglycerol to the sulfhydryl group of the N-terminal cysteine of a prolipoprotein, the first step in the formation of mature lipoproteins. In Salmonella choleraesuis (strain SC-B67), this protein is Phosphatidylglycerol--prolipoprotein diacylglyceryl transferase.